Consider the following 521-residue polypeptide: Anthranilate synthase component 1 (521 aa).

L-tryptophan is bound by residues threonine 40 and 292-294; that span reads PYM. 329–330 provides a ligand contact to chorismate; sequence GT. Glutamate 362 contacts Mg(2+). Chorismate-binding positions include tyrosine 450, arginine 470, 484–486, and glycine 486; that span reads GAG. Glutamate 499 lines the Mg(2+) pocket.

Belongs to the anthranilate synthase component I family. In terms of assembly, heterotetramer consisting of two non-identical subunits: a beta subunit (TrpG) and a large alpha subunit (TrpE). Requires Mg(2+) as cofactor.

The enzyme catalyses chorismate + L-glutamine = anthranilate + pyruvate + L-glutamate + H(+). The protein operates within amino-acid biosynthesis; L-tryptophan biosynthesis; L-tryptophan from chorismate: step 1/5. Feedback inhibited by tryptophan. Functionally, part of a heterotetrameric complex that catalyzes the two-step biosynthesis of anthranilate, an intermediate in the biosynthesis of L-tryptophan. In the first step, the glutamine-binding beta subunit (TrpG) of anthranilate synthase (AS) provides the glutamine amidotransferase activity which generates ammonia as a substrate that, along with chorismate, is used in the second step, catalyzed by the large alpha subunit of AS (TrpE) to produce anthranilate. In the absence of TrpG, TrpE can synthesize anthranilate directly from chorismate and high concentrations of ammonia. This Buchnera aphidicola subsp. Acyrthosiphon pisum (strain APS) (Acyrthosiphon pisum symbiotic bacterium) protein is Anthranilate synthase component 1 (trpE).